A 182-amino-acid polypeptide reads, in one-letter code: MNKQPEDWLDDVPENKNDDDDEIIWVSKSEIKRDAEALKDLGTELVDLGKNALERIPLDEDLLAAIELAQKIKKEGRRRQLQLIGKMLRARDVEPIQTALDKLKNRHNQQISLFHKLETLRDRLIAEGDEAIPTVLELYPDADRQQLRSLVRNAQKEQAANKPPKSFRQIFSYLRELAEKKQ.

Belongs to the DarP family.

Its subcellular location is the cytoplasm. In terms of biological role, member of a network of 50S ribosomal subunit biogenesis factors which assembles along the 30S-50S interface, preventing incorrect 23S rRNA structures from forming. Promotes peptidyl transferase center (PTC) maturation. In Yersinia pestis, this protein is Dual-action ribosomal maturation protein DarP.